A 502-amino-acid chain; its full sequence is Probable glycine dehydrogenase (decarboxylating) subunit 2 (502 aa).

At K273 the chain carries N6-(pyridoxal phosphate)lysine.

This sequence belongs to the GcvP family. C-terminal subunit subfamily. The glycine cleavage system is composed of four proteins: P, T, L and H. In this organism, the P 'protein' is a heterodimer of two subunits. Pyridoxal 5'-phosphate is required as a cofactor.

The catalysed reaction is N(6)-[(R)-lipoyl]-L-lysyl-[glycine-cleavage complex H protein] + glycine + H(+) = N(6)-[(R)-S(8)-aminomethyldihydrolipoyl]-L-lysyl-[glycine-cleavage complex H protein] + CO2. Its function is as follows. The glycine cleavage system catalyzes the degradation of glycine. The P protein binds the alpha-amino group of glycine through its pyridoxal phosphate cofactor; CO(2) is released and the remaining methylamine moiety is then transferred to the lipoamide cofactor of the H protein. The sequence is that of Probable glycine dehydrogenase (decarboxylating) subunit 2 from Thermococcus kodakarensis (strain ATCC BAA-918 / JCM 12380 / KOD1) (Pyrococcus kodakaraensis (strain KOD1)).